We begin with the raw amino-acid sequence, 174 residues long: RNA pyrophosphohydrolase (174 aa).

Residues 6 to 149 (GFRANVGIII…KRDVYRKVMK (144 aa)) form the Nudix hydrolase domain. A Nudix box motif is present at residues 38-59 (GGVDDGESAEEAMYRELYEEVG).

It belongs to the Nudix hydrolase family. RppH subfamily. Requires a divalent metal cation as cofactor.

Accelerates the degradation of transcripts by removing pyrophosphate from the 5'-end of triphosphorylated RNA, leading to a more labile monophosphorylated state that can stimulate subsequent ribonuclease cleavage. This chain is RNA pyrophosphohydrolase, found in Shewanella sp. (strain W3-18-1).